The chain runs to 588 residues: Probable catabolite repression protein creC (588 aa).

4 WD repeats span residues Val249–Thr289, Leu323–Arg364, Ser365–Arg404, and Gly407–Pro451. The segment at Arg452 to Asp499 is disordered. Residues Gln455 to His471 show a composition bias toward polar residues. Residues Ile523 to Thr560 form a WD 5 repeat. Positions Ala569–Leu588 are disordered.

The protein belongs to the WD repeat creC family. As to quaternary structure, interacts with creB.

Functionally, component of the regulatory network controlling carbon source utilization through ubiquitination and deubiquitination involving creA, creB, creC, creD and acrB. Required to prevent the proteolysis of the CreB deubiquitinating enzyme in the absence of carbon catabolite repression. CreB deubiquitinating enzyme stabilized in a complex with the CreC leads to the expression of genes such as those in the proline and quinate pathways. The protein is Probable catabolite repression protein creC (creC) of Aspergillus terreus (strain NIH 2624 / FGSC A1156).